The primary structure comprises 262 residues: Taurine import ATP-binding protein TauB (262 aa).

One can recognise an ABC transporter domain in the interval 4-233 (LELERISAQY…RYAAGESARA (230 aa)). 38–45 (GPSGSGKT) provides a ligand contact to ATP.

It belongs to the ABC transporter superfamily. Taurine importer (TC 3.A.1.17.1) family. The complex is composed of two ATP-binding proteins (TauB), two transmembrane proteins (TauC) and a solute-binding protein (TauA).

The protein localises to the cell inner membrane. The catalysed reaction is taurine(out) + ATP + H2O = taurine(in) + ADP + phosphate + H(+). In terms of biological role, part of the ABC transporter complex TauABC involved in taurine import. Responsible for energy coupling to the transport system. The polypeptide is Taurine import ATP-binding protein TauB (Pseudomonas putida (Arthrobacter siderocapsulatus)).